Here is a 157-residue protein sequence, read N- to C-terminus: 3-dehydroquinate dehydratase (157 aa).

The active-site Proton acceptor is Y29. Substrate-binding residues include N80, H86, and D93. H107 (proton donor) is an active-site residue. Residues 108 to 109 and R118 each bind substrate; that span reads IS.

This sequence belongs to the type-II 3-dehydroquinase family. In terms of assembly, homododecamer.

The enzyme catalyses 3-dehydroquinate = 3-dehydroshikimate + H2O. It functions in the pathway metabolic intermediate biosynthesis; chorismate biosynthesis; chorismate from D-erythrose 4-phosphate and phosphoenolpyruvate: step 3/7. Its function is as follows. Catalyzes a trans-dehydration via an enolate intermediate. In Streptomyces coelicolor (strain ATCC BAA-471 / A3(2) / M145), this protein is 3-dehydroquinate dehydratase (aroQ).